Consider the following 406-residue polypeptide: Tyrosine--tRNA ligase (406 aa).

Y35 contributes to the L-tyrosine binding site. The 'HIGH' region motif lies at 40–49 (PTADSLHVGH). Residues Y168 and Q172 each contribute to the L-tyrosine site. The short motif at 228-232 (KMGKT) is the 'KMSKS' region element. An ATP-binding site is contributed by K231. The S4 RNA-binding domain occupies 340–404 (AELLDILVEA…RGKKNYNKIV (65 aa)).

This sequence belongs to the class-I aminoacyl-tRNA synthetase family. TyrS type 1 subfamily. In terms of assembly, homodimer.

The protein localises to the cytoplasm. It carries out the reaction tRNA(Tyr) + L-tyrosine + ATP = L-tyrosyl-tRNA(Tyr) + AMP + diphosphate + H(+). In terms of biological role, catalyzes the attachment of tyrosine to tRNA(Tyr) in a two-step reaction: tyrosine is first activated by ATP to form Tyr-AMP and then transferred to the acceptor end of tRNA(Tyr). The sequence is that of Tyrosine--tRNA ligase from Clostridium perfringens (strain 13 / Type A).